A 334-amino-acid polypeptide reads, in one-letter code: Glyceraldehyde-3-phosphate dehydrogenase 1 (334 aa).

NAD(+) is bound by residues 12 to 13 (RI), Asp-35, and Arg-79. Residues 152 to 154 (SCT), Thr-183, Arg-198, 211 to 212 (SG), and Arg-234 contribute to the D-glyceraldehyde 3-phosphate site. Cys-153 functions as the Nucleophile in the catalytic mechanism. Asn-315 lines the NAD(+) pocket.

It belongs to the glyceraldehyde-3-phosphate dehydrogenase family. Homotetramer.

The protein localises to the cytoplasm. The enzyme catalyses D-glyceraldehyde 3-phosphate + phosphate + NAD(+) = (2R)-3-phospho-glyceroyl phosphate + NADH + H(+). It functions in the pathway carbohydrate degradation; glycolysis; pyruvate from D-glyceraldehyde 3-phosphate: step 1/5. With respect to regulation, resistant to pentalenolactone. Its function is as follows. Catalyzes the oxidative phosphorylation of glyceraldehyde 3-phosphate (G3P) to 1,3-bisphosphoglycerate (BPG) using the cofactor NAD. The first reaction step involves the formation of a hemiacetal intermediate between G3P and a cysteine residue, and this hemiacetal intermediate is then oxidized to a thioester, with concomitant reduction of NAD to NADH. The reduced NADH is then exchanged with the second NAD, and the thioester is attacked by a nucleophilic inorganic phosphate to produce BPG. This chain is Glyceraldehyde-3-phosphate dehydrogenase 1 (gap1), found in Streptomyces avermitilis (strain ATCC 31267 / DSM 46492 / JCM 5070 / NBRC 14893 / NCIMB 12804 / NRRL 8165 / MA-4680).